Here is a 99-residue protein sequence, read N- to C-terminus: U11-barytoxin-Tl1a (99 aa).

An N-terminal signal peptide occupies residues 1-21 (MKTLVLVAVLGLASLYLLSYA). A propeptide spanning residues 22–50 (SEVQQISRDEEDFRALMASFGGIFDTEER) is cleaved from the precursor. Intrachain disulfides connect cysteine 57–cysteine 71, cysteine 64–cysteine 76, and cysteine 70–cysteine 90.

This sequence belongs to the neurotoxin 10 (Hwtx-1) family. 25 (ICK4) subfamily. Expressed by the venom gland.

The protein localises to the secreted. Its function is as follows. Ion channel inhibitor. In Trittame loki (Brush-footed trapdoor spider), this protein is U11-barytoxin-Tl1a.